A 24-amino-acid polypeptide reads, in one-letter code: Brevinin-1R (24 aa).

Cys-18 and Cys-24 are disulfide-bonded.

As to expression, expressed by the skin glands.

It localises to the secreted. Antimicrobial peptide. In Pelophylax ridibundus (Marsh frog), this protein is Brevinin-1R.